Reading from the N-terminus, the 472-residue chain is Phenylalanine--tRNA ligase, mitochondrial (472 aa).

Substrate-binding positions include 157–160 (SAHQ), R179, 186–188 (QHY), and 193–195 (QLE). N6-acetyllysine is present on K202. Substrate contacts are provided by E287 and F312. One can recognise an FDX-ACB domain in the interval 379–471 (SKYPAVFNDI…AVQLLGVEGR (93 aa)).

The protein belongs to the class-II aminoacyl-tRNA synthetase family. Monomer. In terms of tissue distribution, mainly expressed in the Purkinje cell of cerebellum.

It is found in the mitochondrion matrix. It localises to the mitochondrion. It catalyses the reaction tRNA(Phe) + L-phenylalanine + ATP = L-phenylalanyl-tRNA(Phe) + AMP + diphosphate + H(+). In terms of biological role, is responsible for the charging of tRNA(Phe) with phenylalanine in mitochondrial translation. To a lesser extent, also catalyzes direct attachment of m-Tyr (an oxidized version of Phe) to tRNA(Phe), thereby opening the way for delivery of the misacylated tRNA to the ribosome and incorporation of ROS-damaged amino acid into proteins. The sequence is that of Phenylalanine--tRNA ligase, mitochondrial (Fars2) from Rattus norvegicus (Rat).